A 380-amino-acid chain; its full sequence is Cytochrome b (380 aa).

Transmembrane regions (helical) follow at residues 34 to 54, 78 to 99, 114 to 134, and 179 to 199; these read FGSL…LLAM, WLIR…FLHI, WNTG…GYVL, and FFAL…IHLT. 2 residues coordinate heme b: His84 and His98. Heme b contacts are provided by His183 and His197. A ubiquinone is bound at residue His202. 4 helical membrane passes run 227–247, 289–309, 321–341, and 348–368; these read LKDI…ALFS, LGGV…PFLH, LSQI…WIGS, and FIII…ILFP.

It belongs to the cytochrome b family. The cytochrome bc1 complex contains 11 subunits: 3 respiratory subunits (MT-CYB, CYC1 and UQCRFS1), 2 core proteins (UQCRC1 and UQCRC2) and 6 low-molecular weight proteins (UQCRH/QCR6, UQCRB/QCR7, UQCRQ/QCR8, UQCR10/QCR9, UQCR11/QCR10 and a cleavage product of UQCRFS1). This cytochrome bc1 complex then forms a dimer. The cofactor is heme b.

It is found in the mitochondrion inner membrane. Functionally, component of the ubiquinol-cytochrome c reductase complex (complex III or cytochrome b-c1 complex) that is part of the mitochondrial respiratory chain. The b-c1 complex mediates electron transfer from ubiquinol to cytochrome c. Contributes to the generation of a proton gradient across the mitochondrial membrane that is then used for ATP synthesis. In Polyplectron bicalcaratum (Grey peacock-pheasant), this protein is Cytochrome b (MT-CYB).